The chain runs to 394 residues: A-type flagellin (394 aa).

Belongs to the bacterial flagellin family. Phosphorylated on tyrosine residue(s). In terms of processing, flagellin from strain 5939 but not from strain 170018 is glycosylated.

The protein localises to the secreted. Its subcellular location is the bacterial flagellum. Functionally, flagellin is the subunit protein which polymerizes to form the filaments of bacterial flagella. This chain is A-type flagellin (fliC), found in Pseudomonas aeruginosa.